A 526-amino-acid chain; its full sequence is Alpha-1,3-mannosyl-glycoprotein 4-beta-N-acetylglucosaminyltransferase A (526 aa).

Over 1–6 (MRLRNG) the chain is Cytoplasmic. The helical; Signal-anchor for type II membrane protein transmembrane segment at 7–27 (TVATALVFVTSFLTLSWYTTW) threads the bilayer. Positions 28–63 (QNGKEKLIAYQREFLALKERLRVAEHRISQRSSELN) form a coiled coil. The Lumenal portion of the chain corresponds to 28–526 (QNGKEKLIAY…NEIHIKKVTS (499 aa)). Residue N449 is glycosylated (N-linked (GlcNAc...) asparagine). S465 is subject to Phosphoserine.

It belongs to the glycosyltransferase 54 family. The cofactor is a divalent metal cation. In terms of processing, N-glycosylated.

The protein resides in the golgi apparatus membrane. It localises to the secreted. It carries out the reaction N(4)-{beta-D-GlcNAc-(1-&gt;2)-alpha-D-Man-(1-&gt;3)-[beta-D-GlcNAc-(1-&gt;2)-alpha-D-Man-(1-&gt;6)]-beta-D-Man-(1-&gt;4)-beta-D-GlcNAc-(1-&gt;4)-beta-D-GlcNAc}-L-asparaginyl-[protein] + UDP-N-acetyl-alpha-D-glucosamine = N(4)-{beta-D-GlcNAc-(1-&gt;2)-[beta-D-GlcNAc-(1-&gt;4)]-alpha-D-Man-(1-&gt;3)-[beta-D-GlcNAc-(1-&gt;2)-alpha-D-Man-(1-&gt;6)]-beta-D-Man-(1-&gt;4)-beta-D-GlcNAc-(1-&gt;4)-beta-D-GlcNAc}-L-asparaginyl-[protein] + UDP + H(+). The catalysed reaction is an N(4)-{beta-D-GlcNAc-(1-&gt;2)-alpha-D-Man-(1-&gt;3)-[alpha-D-Man-(1-&gt;6)]-beta-D-Man-(1-&gt;4)-beta-D-GlcNAc-(1-&gt;4)-beta-D-GlcNAc}-L-asparaginyl-[protein] + UDP-N-acetyl-alpha-D-glucosamine = an N(4)-{beta-D-GlcNAc-(1-&gt;2)-[beta-D-GlcNAc-(1-&gt;4)]-alpha-D-Man-(1-&gt;3)-[alpha-D-Man-(1-&gt;6)]-beta-D-Man-(1-&gt;4)-beta-D-GlcNAc-(1-&gt;4)-beta-D-GlcNAc}-L-asparaginyl-[protein] + UDP + H(+). The enzyme catalyses an N(4)-{beta-D-GlcNAc-(1-&gt;2)-alpha-D-Man-(1-&gt;3)-[beta-D-GlcNAc-(1-&gt;2)-[beta-D-GlcNAc-(1-&gt;6)]-alpha-D-Man-(1-&gt;6)]-beta-D-Man-(1-&gt;4)-beta-D-GlcNAc-(1-&gt;4)-beta-D-GlcNAc}-L-asparaginyl-[protein] + UDP-N-acetyl-alpha-D-glucosamine = an N(4)-{beta-D-GlcNAc-(1-&gt;2)-[beta-D-GlcNAc-(1-&gt;4)]-alpha-D-Man-(1-&gt;3)-[beta-D-GlcNAc-(1-&gt;2)-[beta-D-GlcNAc-(1-&gt;6)]-alpha-D-Man-(1-&gt;6)]-beta-D-Man-(1-&gt;4)-beta-D-GlcNAc-(1-&gt;4)-beta-D-GlcNAc}-L-asparaginyl-[protein] + UDP + H(+). It catalyses the reaction an N(4)-{beta-D-GlcNAc-(1-&gt;2)-alpha-D-Man-(1-&gt;3)-[beta-D-GlcNAc-(1-&gt;2)-alpha-D-Man-(1-&gt;6)]-beta-D-Man-(1-&gt;4)-beta-D-GlcNAc-(1-&gt;4)-[alpha-L-Fuc-(1-&gt;6)]-beta-D-GlcNAc}-L-asparaginyl-[protein] + UDP-N-acetyl-alpha-D-glucosamine = N(4)-{beta-D-GlcNAc-(1-&gt;2)-[beta-D-GlcNAc-(1-&gt;4)]-alpha-D-Man-(1-&gt;3)-[beta-D-GlcNAc-(1-&gt;2)-alpha-D-Man-(1-&gt;6)]-beta-D-Man-(1-&gt;4)-beta-D-GlcNAc-(1-&gt;4)-[alpha-L-Fuc-(1-&gt;6)]-beta-D-GlcNAc}-asparaginyl-[protein] + UDP + H(+). It carries out the reaction an N(4)-{beta-D-GlcNAc-(1-&gt;2)-alpha-D-Man-(1-&gt;3)-[beta-D-Gal-(1-&gt;4)-beta-D-GlcNAc-(1-&gt;2)-alpha-D-Man-(1-&gt;6)]-beta-D-Man-(1-&gt;4)-beta-D-GlcNAc-(1-&gt;4)-beta-D-GlcNAc}-L-asparaginyl-[protein] + UDP-N-acetyl-alpha-D-glucosamine = an N(4)-{beta-D-GlcNAc-(1-&gt;2)-[beta-D-GlcNAc-(1-&gt;4)]-alpha-D-Man-(1-&gt;3)-[beta-D-Gal-(1-&gt;4)-beta-D-GlcNAc-(1-&gt;2)-alpha-D-Man-(1-&gt;6)]-beta-D-Man-(1-&gt;4)-beta-D-GlcNAc-(1-&gt;4)-beta-D-GlcNAc}-L-asparaginyl-[protein] + UDP + H(+). The catalysed reaction is N(4)-{beta-D-GlcNAc-(1-&gt;2)-alpha-D-Man-(1-&gt;3)-[alpha-D-Man-(1-&gt;3)-{alpha-D-Man-(1-&gt;6)}-alpha-D-Man-(1-&gt;6)]-beta-D-Man-(1-&gt;4)-beta-D-GlcNAc-(1-&gt;4)-beta-D-GlcNAc}-asparaginyl-[protein] + UDP-N-acetyl-alpha-D-glucosamine = N(4)-{beta-D-GlcNAc-(1-&gt;2)-[beta-D-GlcNAc-(1-&gt;4)]-alpha-D-Man-(1-&gt;3)-[alpha-D-Man-(1-&gt;3)-{alpha-D-Man-(1-&gt;6)}-alpha-D-Man-(1-&gt;6)]-beta-D-Man-(1-&gt;4)-beta-D-GlcNAc-(1-&gt;4)-beta-D-GlcNAc}-asparaginyl-[protein] + UDP + H(+). The enzyme catalyses N(4)-{beta-D-GlcNAc-(1-&gt;2)-alpha-D-Man-(1-&gt;3)-beta-D-Man-(1-&gt;4)-beta-D-GlcNAc-(1-&gt;4)-beta-D-GlcNAc}-asparaginyl-[protein] + UDP-N-acetyl-alpha-D-glucosamine = N(4)-{beta-D-GlcNAc-(1-&gt;2)-[beta-D-GlcNAc-(1-&gt;4)]-alpha-D-Man-(1-&gt;3)-beta-D-Man-(1-&gt;4)-beta-D-GlcNAc-(1-&gt;4)-beta-D-GlcNAc}-asparaginyl-[protein] + UDP + H(+). It functions in the pathway protein modification; protein glycosylation. With respect to regulation, inhibited by UDP. Glycosyltransferase that catalyze the transfer of GlcNAc from UDP-GlcNAc to the GlcNAcbeta1-2Manalpha1-3 arm of the core structure of N-linked glycans through a beta1-4 linkage and participates in the production of tri- and tetra-antennary N-linked sugar chains. Involved in glucose transport by mediating SLC2A2/GLUT2 glycosylation, thereby controlling cell-surface expression of SLC2A2 in pancreatic beta cells. The sequence is that of Alpha-1,3-mannosyl-glycoprotein 4-beta-N-acetylglucosaminyltransferase A from Rattus norvegicus (Rat).